The chain runs to 350 residues: Phenylalanine--tRNA ligase alpha subunit (350 aa).

A Mg(2+)-binding site is contributed by Glu-257.

It belongs to the class-II aminoacyl-tRNA synthetase family. Phe-tRNA synthetase alpha subunit type 1 subfamily. In terms of assembly, tetramer of two alpha and two beta subunits. It depends on Mg(2+) as a cofactor.

The protein localises to the cytoplasm. The enzyme catalyses tRNA(Phe) + L-phenylalanine + ATP = L-phenylalanyl-tRNA(Phe) + AMP + diphosphate + H(+). This is Phenylalanine--tRNA ligase alpha subunit from Listeria welshimeri serovar 6b (strain ATCC 35897 / DSM 20650 / CCUG 15529 / CIP 8149 / NCTC 11857 / SLCC 5334 / V8).